A 1043-amino-acid polypeptide reads, in one-letter code: MLNYETIINGASSALNIVSRALGYRVPLAKSLALVAGSCVVYKIIVHRRTLVAFLVIGPYATVVQHRLPMALQRAIIEYTREDREISLFPQNSIVSAEHARKADNGHPISGGTRDVARETISLAIRAAGFRHYEISPARQSPAEAASHQHYAAADLVRAATEDKIQDGDVVVAIDIDYYLRDIDRYLGRGVPFMAYTFNPVEVAGRDGDSFFRITNNQVTFDVSGGGSWSHEVWDWCAFGEFIETRDASWLAWFARAVGLTKSQIHKVHYCRPWPQSPHRALVWCLPVASYWRFTFIPTDLHTRTLRRVRYQDTSRPGWNSIVSTGSEGLNISLGREGADHCVTIPKVHYDMLMGLSSAQSLSSRMIGLKYTDPSVLATVAQYYQGKNVEVADADRIGRAINPKVHWPAHVEVDEAEVSARVYASPLVSDENMMPMIKRWETLSLSLDRRVTFQRNPKVPGKRLRAYAIEFVDLVVPERGVGVPYSLEDTAAMLDKPSQTLAIQQVWETVDMPPRRLIEAFVKNEPTMKAGRIISSFADMRFLLRFSSYTLAFRDQVLHAEHNRHWFCPGLTPEQIATKVVDYVSGVEEPSEGDFSNFDGTVSEWLQRHVMNAVYLRYFNHRAQRDLRSYTDMLVSCPARAKRFGFAYDAGVGVKSGSPTTCDLNTVCNGFLQYCSIRMTHPELTPIDAFRLIGLAFGDDSLFERRFAKNYAKVSAEVGMVLKIERFDPAQGITFLARVYPDPYTSTTSFQDPLRTWRKLHLTTRDPTIPLATAAIDRVEGYLVTDGLSPLTGAYCRMVKRVYEAGGAEDAAKRRSRKSHSREKPYWLTVGGAWPQDVKDVDLMFQCAAARTGVDLETLRSLDQRLGEITDVWADITINRDNEPNPYKDTLDLEGPADGRVDDRVFQNDKHVMRLRANQVTSSQAGAAGSGDASNDPNAHDRGSQRQQGSASVLRVPDRAAPAGVSSDEQPAHQTASRSSASRGGAGPGRGGRRRPGPPAKTTAGGARDGNQARAPTSGPSKRQAEGRSRSSRGPAGSRGRGK.

A helical transmembrane segment spans residues 26-42; that stretch reads VPLAKSLALVAGSCVVY. The interval 43–1043 is cytoplasmic; sequence KIIVHRRTLV…GPAGSRGRGK (1001 aa). Positions 105–291 are capping; the sequence is NGHPISGGTR…LVWCLPVASY (187 aa). The RdRp catalytic domain maps to 588-713; that stretch reads EEPSEGDFSN…ERRFAKNYAK (126 aa). The active-site For RdRp/TNTase activity is aspartate 699. Disordered regions lie at residues 879 to 902 and 918 to 1043; these read NRDNEPNPYKDTLDLEGPADGRVD and NQVT…GRGK. Low complexity-rich tracts occupy residues 922–934 and 1032–1043; these read SSQAGAAGSGDAS and SRGPAGSRGRGK.

The protein belongs to the nodaviridae RNA polymerase family. Homododecamer. Forms 2 stacked rings of 35-nm in diameter, arranged in a crown-like structure at the opening of virus-induced replication vesicles. Interacts with protein B2. It depends on Mn(2+) as a cofactor.

Its subcellular location is the host mitochondrion outer membrane. It catalyses the reaction RNA(n) + a ribonucleoside 5'-triphosphate = RNA(n+1) + diphosphate. In terms of biological role, RNA-dependent RNA polymerase, which replicates the viral genome composed of 2 RNA segments, RNA1 and RNA2. Does not need an exogenous primer. Also possesses a terminal nucleotidyl transferase (TNTase) activity. The TNTase catalyzes the addition of nucleotide to the 3'-end of plus- and minus-stranded RNAs, probably to repair the 3'-end nucleotide loss. Forms the open necked connection to the cytosol of the virus-induced replication vesicles. Mediates viral RNA1 recruitment. The chain is RNA-directed RNA polymerase from Nodamura virus (strain Mag115) (NoV).